We begin with the raw amino-acid sequence, 499 residues long: Glutamate--tRNA ligase (499 aa).

Positions 10-20 (PSPTGTPHVGM) match the 'HIGH' region motif. The 'KMSKS' region motif lies at 255–259 (KLSKR). Lys-258 contributes to the ATP binding site.

This sequence belongs to the class-I aminoacyl-tRNA synthetase family. Glutamate--tRNA ligase type 1 subfamily. In terms of assembly, monomer.

It is found in the cytoplasm. The enzyme catalyses tRNA(Glu) + L-glutamate + ATP = L-glutamyl-tRNA(Glu) + AMP + diphosphate. Its function is as follows. Catalyzes the attachment of glutamate to tRNA(Glu) in a two-step reaction: glutamate is first activated by ATP to form Glu-AMP and then transferred to the acceptor end of tRNA(Glu). In Corynebacterium urealyticum (strain ATCC 43042 / DSM 7109), this protein is Glutamate--tRNA ligase.